The following is a 299-amino-acid chain: tRNA dimethylallyltransferase (299 aa).

Residue 13 to 20 (GPTASGKT) coordinates ATP. 15–20 (TASGKT) provides a ligand contact to substrate. The tract at residues 38 to 41 (DSRQ) is interaction with substrate tRNA.

The protein belongs to the IPP transferase family. As to quaternary structure, monomer. Mg(2+) serves as cofactor.

It carries out the reaction adenosine(37) in tRNA + dimethylallyl diphosphate = N(6)-dimethylallyladenosine(37) in tRNA + diphosphate. Functionally, catalyzes the transfer of a dimethylallyl group onto the adenine at position 37 in tRNAs that read codons beginning with uridine, leading to the formation of N6-(dimethylallyl)adenosine (i(6)A). The polypeptide is tRNA dimethylallyltransferase (Prochlorococcus marinus (strain NATL2A)).